Here is a 400-residue protein sequence, read N- to C-terminus: Subtilisin-like protease 11 (400 aa).

An N-terminal signal peptide occupies residues 1-19; that stretch reads MGLFKVIFTAVAALSAVDA. Residues 20–117 constitute a propeptide that is removed on maturation; that stretch reads AELLSSAKSK…VEHDRHVYIS (98 aa). The 82-residue stretch at 35–116 folds into the Inhibitor I9 domain; it reads SYLVVMKDSV…FVEHDRHVYI (82 aa). Residues 127-400 form the Peptidase S8 domain; that stretch reads SWGLGRVSHR…NKLLYNRSGK (274 aa). Residue N138 is glycosylated (N-linked (GlcNAc...) asparagine). D159 functions as the Charge relay system in the catalytic mechanism. N-linked (GlcNAc...) asparagine glycosylation is present at N181. H191 acts as the Charge relay system in catalysis. N-linked (GlcNAc...) asparagine glycosylation is found at N252 and N337. S346 (charge relay system) is an active-site residue. N-linked (GlcNAc...) asparagine glycans are attached at residues N388 and N396.

The protein belongs to the peptidase S8 family.

The protein localises to the secreted. Its function is as follows. Secreted subtilisin-like serine protease with keratinolytic activity that contributes to pathogenicity. The polypeptide is Subtilisin-like protease 11 (SUB11) (Trichophyton verrucosum (strain HKI 0517)).